Here is a 361-residue protein sequence, read N- to C-terminus: Phosphoserine aminotransferase (361 aa).

R42 contacts L-glutamate. Pyridoxal 5'-phosphate-binding positions include 76–77 (AT), W102, T152, D172, and Q195. Position 196 is an N6-(pyridoxal phosphate)lysine (K196). Position 237–238 (237–238 (NT)) interacts with pyridoxal 5'-phosphate.

This sequence belongs to the class-V pyridoxal-phosphate-dependent aminotransferase family. SerC subfamily. In terms of assembly, homodimer. Pyridoxal 5'-phosphate is required as a cofactor.

The protein resides in the cytoplasm. The catalysed reaction is O-phospho-L-serine + 2-oxoglutarate = 3-phosphooxypyruvate + L-glutamate. It catalyses the reaction 4-(phosphooxy)-L-threonine + 2-oxoglutarate = (R)-3-hydroxy-2-oxo-4-phosphooxybutanoate + L-glutamate. It participates in amino-acid biosynthesis; L-serine biosynthesis; L-serine from 3-phospho-D-glycerate: step 2/3. It functions in the pathway cofactor biosynthesis; pyridoxine 5'-phosphate biosynthesis; pyridoxine 5'-phosphate from D-erythrose 4-phosphate: step 3/5. In terms of biological role, catalyzes the reversible conversion of 3-phosphohydroxypyruvate to phosphoserine and of 3-hydroxy-2-oxo-4-phosphonooxybutanoate to phosphohydroxythreonine. In Xanthomonas oryzae pv. oryzae (strain MAFF 311018), this protein is Phosphoserine aminotransferase.